Consider the following 274-residue polypeptide: Nitrogenase iron protein (274 aa).

8 to 15 (GKGGIGKS) contributes to the ATP binding site. Cys-94 is a binding site for [4Fe-4S] cluster. ADP-ribosylarginine; by dinitrogenase reductase ADP-ribosyltransferase is present on Arg-97. Cys-131 is a [4Fe-4S] cluster binding site.

Belongs to the NifH/BchL/ChlL family. In terms of assembly, homodimer. Requires [4Fe-4S] cluster as cofactor. The reversible ADP-ribosylation of Arg-97 inactivates the nitrogenase reductase and regulates nitrogenase activity.

It catalyses the reaction N2 + 8 reduced [2Fe-2S]-[ferredoxin] + 16 ATP + 16 H2O = H2 + 8 oxidized [2Fe-2S]-[ferredoxin] + 2 NH4(+) + 16 ADP + 16 phosphate + 6 H(+). The key enzymatic reactions in nitrogen fixation are catalyzed by the nitrogenase complex, which has 2 components: the iron protein and the molybdenum-iron protein. The sequence is that of Nitrogenase iron protein from Desulfatibacillum aliphaticivorans.